Here is a 279-residue protein sequence, read N- to C-terminus: ATP-dependent Clp protease proteolytic subunit-related protein 2, chloroplastic (279 aa).

The N-terminal 54 residues, 1–54, are a transit peptide targeting the chloroplast; that stretch reads MAVSFNTTLHQPSLSPSCSIKLYSGLKPQSASFLASGYQNLNKEFYGRVYKSLQ.

This sequence belongs to the peptidase S14 family. Component of the chloroplastic Clp protease core complex which consist of at least 16 proteins: CLPP4 (3 copies), CLPP5 (3 copies), CLPR4 (2 copies), ClpP1 (1 copy), CLPP6 (1 copy), CLPR2 (1 copy), CLPT1 (1 copy), CLPT2 (1 copy) and 3 copies of CLPP3 and/or CLPR1 and/or CLPR3. The core complex is organized in two heptameric rings, one containing CLPP3,4,5,6 in a 1:2:3:1 ratio and the other CLPP1 and CLPR1,2,3,4 in a 3:1:1:1:1 ratio. In terms of tissue distribution, expressed at least in leaves and roots.

It localises to the plastid. The protein resides in the chloroplast. Its function is as follows. Required for chloroplast development and integrity. Involved in the regulation of plastoglobules formation. This Arabidopsis thaliana (Mouse-ear cress) protein is ATP-dependent Clp protease proteolytic subunit-related protein 2, chloroplastic.